The primary structure comprises 342 residues: Methionine import ATP-binding protein MetN 2 (342 aa).

The region spanning 2–241 (ISIEGLSKVF…PKQLVTRKFV (240 aa)) is the ABC transporter domain. 38–45 (GYSGAGKS) contacts ATP.

Belongs to the ABC transporter superfamily. Methionine importer (TC 3.A.1.24) family. In terms of assembly, the complex is composed of two ATP-binding proteins (MetN), two transmembrane proteins (MetI) and a solute-binding protein (MetQ).

It is found in the cell membrane. It catalyses the reaction L-methionine(out) + ATP + H2O = L-methionine(in) + ADP + phosphate + H(+). It carries out the reaction D-methionine(out) + ATP + H2O = D-methionine(in) + ADP + phosphate + H(+). In terms of biological role, part of the ABC transporter complex MetNIQ involved in methionine import. Responsible for energy coupling to the transport system. The protein is Methionine import ATP-binding protein MetN 2 of Oceanobacillus iheyensis (strain DSM 14371 / CIP 107618 / JCM 11309 / KCTC 3954 / HTE831).